We begin with the raw amino-acid sequence, 258 residues long: AAGRGAWVRTWAPLAMAAKVDLSTSTDWKEAKSFLKGLSDKQREEHYFCKDFIKLKKIPMWKETAKGLAGKVENPKYKKDKQLNEKISLFRGDITKLEVDAIVNAANNSLLGGGGVDGCIHRAAGSLLTDECRTLQNCETGKAKITCGYRLPAKHVIHTVGPIAVGQPTASQAAELRSCYLSSLDLLLEHRLRSVAFPCISTGVFGYPNEEAAEVVLATLREWLEQHKDKVDRLIICVFLEKDEGIYQERLPHYFPVA.

An N6-succinyllysine mark is found at Lys29, Lys36, and Lys62. Lys71 participates in a covalent cross-link: Glycyl lysine isopeptide (Lys-Gly) (interchain with G-Cter in SUMO2). The region spanning 74–255 (NPKYKKDKQL…IYQERLPHYF (182 aa)) is the Macro domain. 92–94 (GDI) contacts substrate. Lys96 is subject to N6-acetyllysine. Residues 105-107 (AAN), 112-117 (GGGGVD), 200-206 (ISTGVFG), and Phe239 each bind substrate.

Belongs to the MacroD-type family. MacroD1/2-like subfamily. As to quaternary structure, interacts with ESR1; Interacts in a manner that is estrogen independent but is enhanced by estrogen. Interacts (via macro domain) with AR.

Its subcellular location is the nucleus. The enzyme catalyses 3''-O-acetyl-ADP-D-ribose + H2O = ADP-D-ribose + acetate + H(+). It carries out the reaction 2''-O-acetyl-ADP-D-ribose + H2O = ADP-D-ribose + acetate + H(+). The catalysed reaction is 4-O-(ADP-D-ribosyl)-L-aspartyl-[protein] + H2O = L-aspartyl-[protein] + ADP-D-ribose + H(+). It catalyses the reaction 5-O-(ADP-D-ribosyl)-L-glutamyl-[protein] + H2O = L-glutamyl-[protein] + ADP-D-ribose + H(+). The enzyme catalyses alpha-NAD(+) + H2O = ADP-D-ribose + nicotinamide + H(+). Its activity is regulated as follows. Subject to competitive inhibition by the product ADP-ribose. Functionally, removes ADP-ribose from aspartate and glutamate residues in proteins bearing a single ADP-ribose moiety. Inactive towards proteins bearing poly-ADP-ribose. Deacetylates O-acetyl-ADP ribose, a signaling molecule generated by the deacetylation of acetylated lysine residues in histones and other proteins. Plays a role in estrogen signaling. Binds to androgen receptor (AR) and amplifies the transactivation function of AR in response to androgen. May play an important role in carcinogenesis and/or progression of hormone-dependent cancers by feed-forward mechanism that activates ESR1 transactivation. Could be an ESR1 coactivator, providing a positive feedback regulatory loop for ESR1 signal transduction. Could be involved in invasive growth by down-regulating CDH1 in endometrial cancer cells. Enhances ESR1-mediated transcription activity. The sequence is that of ADP-ribose glycohydrolase MACROD1 (Macrod1) from Rattus norvegicus (Rat).